The chain runs to 202 residues: Prephenate decarboxylase (202 aa).

This sequence belongs to the prephenate decarboxylase family.

The catalysed reaction is prephenate + H(+) = 3-[(4R)-4-hydroxycyclohexa-1,5-dien-1-yl]-2-oxopropanoate + CO2. Functionally, in vivo, involved in the biosynthesis of 2-carboxy-6-hydroxyoctahydroindole (Choi) present in the nonribosomal glycopeptides aeruginoside 126A and B. AerD is an unusual prephenate decarboxylase that avoids the typical aromatization of the cyclohexadienol ring of prephenate. AerD catalyzes the protonation at C8 followed by decarboxylation to produce the dihydro-4-hydroxyphenylpyruvate regioisomer A258 (H2HPP A258)(3-(4-hydroxycyclohexa- 1,5-dienyl)-2-oxopropanoic acid), which is able to undergo a nonenzymatic isomerization to produce dihydro-4-hydroxyphenylpyruvate regioisomer A295 (H2HPP A295)(3-(4-hydroxycyclohex-2-enylidene)-2-oxopropanoic acid). This is Prephenate decarboxylase from Planktothrix agardhii (strain NIVA-CYA 126/8).